A 519-amino-acid polypeptide reads, in one-letter code: Membrane-bound lytic murein transglycosylase F (519 aa).

The first 32 residues, Met-1–Ala-32, serve as a signal peptide directing secretion. The segment at Asp-33–Gly-269 is non-LT domain. Residues Asn-270–Arg-519 are LT domain. The active site involves Glu-314. The tract at residues Pro-495 to Arg-519 is disordered. Over residues Ala-508–Arg-519 the composition is skewed to polar residues.

It in the N-terminal section; belongs to the bacterial solute-binding protein 3 family. In the C-terminal section; belongs to the transglycosylase Slt family.

Its subcellular location is the cell outer membrane. It catalyses the reaction Exolytic cleavage of the (1-&gt;4)-beta-glycosidic linkage between N-acetylmuramic acid (MurNAc) and N-acetylglucosamine (GlcNAc) residues in peptidoglycan, from either the reducing or the non-reducing ends of the peptidoglycan chains, with concomitant formation of a 1,6-anhydrobond in the MurNAc residue.. Its function is as follows. Murein-degrading enzyme that degrades murein glycan strands and insoluble, high-molecular weight murein sacculi, with the concomitant formation of a 1,6-anhydromuramoyl product. Lytic transglycosylases (LTs) play an integral role in the metabolism of the peptidoglycan (PG) sacculus. Their lytic action creates space within the PG sacculus to allow for its expansion as well as for the insertion of various structures such as secretion systems and flagella. In Cronobacter sakazakii (strain ATCC BAA-894) (Enterobacter sakazakii), this protein is Membrane-bound lytic murein transglycosylase F.